Here is a 290-residue protein sequence, read N- to C-terminus: ATP synthase gamma chain (290 aa).

It belongs to the ATPase gamma chain family. As to quaternary structure, F-type ATPases have 2 components, CF(1) - the catalytic core - and CF(0) - the membrane proton channel. CF(1) has five subunits: alpha(3), beta(3), gamma(1), delta(1), epsilon(1). CF(0) has three main subunits: a, b and c.

It is found in the cell membrane. Produces ATP from ADP in the presence of a proton gradient across the membrane. The gamma chain is believed to be important in regulating ATPase activity and the flow of protons through the CF(0) complex. The protein is ATP synthase gamma chain of Buchnera aphidicola subsp. Acyrthosiphon pisum (strain 5A).